Reading from the N-terminus, the 125-residue chain is Mating factor alpha (125 aa).

The first 22 residues, 1 to 22 (MKLFTTLSASLIFIHSLGSTRA), serve as a signal peptide directing secretion. Asn-57 and Asn-67 each carry an N-linked (GlcNAc...) asparagine glycan.

In Lachancea kluyveri (Yeast), this protein is Mating factor alpha.